The following is a 161-amino-acid chain: uncharacterized protein (161 aa).

This is an uncharacterized protein from Archaeoglobus fulgidus (strain ATCC 49558 / DSM 4304 / JCM 9628 / NBRC 100126 / VC-16).